The following is a 203-amino-acid chain: ATP-dependent Clp protease proteolytic subunit (203 aa).

The active-site Nucleophile is Ser100. His125 is a catalytic residue.

Belongs to the peptidase S14 family. Fourteen ClpP subunits assemble into 2 heptameric rings which stack back to back to give a disk-like structure with a central cavity, resembling the structure of eukaryotic proteasomes.

It is found in the cytoplasm. It carries out the reaction Hydrolysis of proteins to small peptides in the presence of ATP and magnesium. alpha-casein is the usual test substrate. In the absence of ATP, only oligopeptides shorter than five residues are hydrolyzed (such as succinyl-Leu-Tyr-|-NHMec, and Leu-Tyr-Leu-|-Tyr-Trp, in which cleavage of the -Tyr-|-Leu- and -Tyr-|-Trp bonds also occurs).. Cleaves peptides in various proteins in a process that requires ATP hydrolysis. Has a chymotrypsin-like activity. Plays a major role in the degradation of misfolded proteins. The protein is ATP-dependent Clp protease proteolytic subunit of Anaeromyxobacter dehalogenans (strain 2CP-1 / ATCC BAA-258).